The primary structure comprises 344 residues: MVKVGIVGGTGYTGVELLRLLAQHPQAEVVVITSRSEAGLAVADMYPNLRGHYDGLAFSVPDIKTLGACDVVFFATPHGVAHALAGELLAAGTKVIDLSADFRLQDADEWAKWYGQPHGAPELLDEAVYGLPEVNREQIRKARLIAVPGCYPTATQLGFLPLLEAGIADASHLIADCKSGVSGAGRGAAVGSLYSETSESMKAYAVKGHRHLPEIRQGLRRAAGKDVGLTFVPHLTPMIRGIHSTLYATVVDRSVDLQALFEKRYANEPFVDVMPAGSHPETRSVRGANVCRIAVHRPQDGDLVVVLSVIDNLVKGASGQAVQNMNILFGLDERLGLSHAGMLP.

The active site involves cysteine 150.

Belongs to the NAGSA dehydrogenase family. Type 1 subfamily.

The protein resides in the cytoplasm. It catalyses the reaction N-acetyl-L-glutamate 5-semialdehyde + phosphate + NADP(+) = N-acetyl-L-glutamyl 5-phosphate + NADPH + H(+). The protein operates within amino-acid biosynthesis; L-arginine biosynthesis; N(2)-acetyl-L-ornithine from L-glutamate: step 3/4. In terms of biological role, catalyzes the NADPH-dependent reduction of N-acetyl-5-glutamyl phosphate to yield N-acetyl-L-glutamate 5-semialdehyde. This chain is N-acetyl-gamma-glutamyl-phosphate reductase, found in Pseudomonas fluorescens (strain Pf0-1).